The sequence spans 372 residues: MREILKNVRRLVVKIGSSSLTHPETGKINLAAMERFVRECADLKNAGFEVIIVSSGAIAAGMGRLALPEKPKNLPEKQACAAVGQGVLMHLYEKFFSEYQVIAAQVLLTGEDLAVRKRFLNAKHTFSALLNYGVVPVVNENDTVAVEEIRFGDNDTLSARVAVLVEADLLVLLSDIDGLYTADPRKNSNARFLPEVLEINEEIEQLAGGSGTAVGTGGMETKIEAAKIAVNAGIPMVIARADYGNLRRILRGEEVGTFFYPKKKKQWKKQWLLSGARVQGSIIVDLGAEEALCSGGKSLLPSGVLGVEGEFPTGAIVAVKNLKGRVIAKGLTNYAAQDILKIKGLHSWEIADVLGHKDYDEIIHRDNLVLVD.

Residue K14 coordinates ATP. Substrate-binding residues include S55, D142, and N154. ATP-binding positions include S174–D175 and T216–K222. A PUA domain is found at Q279–K357.

Belongs to the glutamate 5-kinase family.

It localises to the cytoplasm. It carries out the reaction L-glutamate + ATP = L-glutamyl 5-phosphate + ADP. The protein operates within amino-acid biosynthesis; L-proline biosynthesis; L-glutamate 5-semialdehyde from L-glutamate: step 1/2. Functionally, catalyzes the transfer of a phosphate group to glutamate to form L-glutamate 5-phosphate. This Carboxydothermus hydrogenoformans (strain ATCC BAA-161 / DSM 6008 / Z-2901) protein is Glutamate 5-kinase.